Consider the following 456-residue polypeptide: Arginine biosynthesis bifunctional protein ArgJ, mitochondrial (456 aa).

Substrate is bound by residues Thr184, Lys213, Thr224, Glu311, Asn451, and Thr456. Thr224 functions as the Nucleophile in the catalytic mechanism.

Belongs to the ArgJ family. As to quaternary structure, heterodimer of an alpha and a beta chain. The alpha and beta chains are autoproteolytically processed from a single precursor protein within the mitochondrion.

It localises to the mitochondrion matrix. It catalyses the reaction N(2)-acetyl-L-ornithine + L-glutamate = N-acetyl-L-glutamate + L-ornithine. It carries out the reaction L-glutamate + acetyl-CoA = N-acetyl-L-glutamate + CoA + H(+). It participates in amino-acid biosynthesis; L-arginine biosynthesis; L-ornithine and N-acetyl-L-glutamate from L-glutamate and N(2)-acetyl-L-ornithine (cyclic): step 1/1. It functions in the pathway amino-acid biosynthesis; L-arginine biosynthesis; N(2)-acetyl-L-ornithine from L-glutamate: step 1/4. Functionally, catalyzes two activities which are involved in the cyclic version of arginine biosynthesis: the synthesis of acetylglutamate from glutamate and acetyl-CoA, and of ornithine by transacetylation between acetylornithine and glutamate. The chain is Arginine biosynthesis bifunctional protein ArgJ, mitochondrial from Aspergillus oryzae (strain ATCC 42149 / RIB 40) (Yellow koji mold).